A 217-amino-acid polypeptide reads, in one-letter code: MSKKLASPLSFLPLYNLLSAVGWSYLLYLVISLYPKVGQPAFFYQTKNVATLVQCGAIIEIINSFLGVVRSPLLTTVAQVSSRLLVVLGIFQLLPNTSGVQSVVYISLLLAWSITEIVRYLYYFFMLVFKNGAPKILILLRYNLFWILYPTGVASELRIIYCALNAAESQYSLLYKRILIAAMLAYIPGFPMLFLHMVAQRKKVMKSLRSSFGKKLI.

The Cytoplasmic segment spans residues 1 to 11; the sequence is MSKKLASPLSF. A helical transmembrane segment spans residues 12–29; it reads LPLYNLLSAVGWSYLLYL. Residues 30–47 are Lumenal-facing; the sequence is VISLYPKVGQPAFFYQTK. Residues 48 to 66 form a helical membrane-spanning segment; it reads NVATLVQCGAIIEIINSFL. The Cytoplasmic portion of the chain corresponds to 67–76; the sequence is GVVRSPLLTT. Residues 77–94 traverse the membrane as a helical segment; the sequence is VAQVSSRLLVVLGIFQLL. The Lumenal segment spans residues 95–99; the sequence is PNTSG. A helical membrane pass occupies residues 100–117; the sequence is VQSVVYISLLLAWSITEI. Topologically, residues 118 to 142 are cytoplasmic; sequence VRYLYYFFMLVFKNGAPKILILLRY. Residues 143 to 160 form a helical membrane-spanning segment; that stretch reads NLFWILYPTGVASELRII. Active-site residues include Y149 and E156. Residues 161-178 are Lumenal-facing; the sequence is YCALNAAESQYSLLYKRI. The helical transmembrane segment at 179-196 threads the bilayer; that stretch reads LIAAMLAYIPGFPMLFLH. Residues 197–217 lie on the Cytoplasmic side of the membrane; it reads MVAQRKKVMKSLRSSFGKKLI. The Endoplasmic reticulum retention signal signature appears at 214–217; it reads KKLI.

This sequence belongs to the very long-chain fatty acids dehydratase HACD family.

It localises to the endoplasmic reticulum membrane. Its subcellular location is the vacuole membrane. It catalyses the reaction a very-long-chain (3R)-3-hydroxyacyl-CoA = a very-long-chain (2E)-enoyl-CoA + H2O. It carries out the reaction (3R)-hydroxyeicosanoyl-CoA = (2E)-eicosenoyl-CoA + H2O. The enzyme catalyses (3R)-hydroxydocosanoyl-CoA = (2E)-docosenoyl-CoA + H2O. The catalysed reaction is (3R)-hydroxyoctadecanoyl-CoA = (2E)-octadecenoyl-CoA + H2O. It catalyses the reaction (3R)-hydroxytetracosanoyl-CoA = (2E)-tetracosenoyl-CoA + H2O. It carries out the reaction (3R)-hydroxyhexacosanoyl-CoA = (2E)-hexacosenoyl-CoA + H2O. The enzyme catalyses (3R)-hydroxyhexadecanoyl-CoA = (2E)-hexadecenoyl-CoA + H2O. The protein operates within lipid metabolism; fatty acid biosynthesis. Functionally, catalyzes the third of the four reactions of the long-chain fatty acids elongation cycle. This endoplasmic reticulum-bound enzymatic process, allows the addition of two carbons to the chain of long- and very long-chain fatty acids/VLCFAs per cycle. This enzyme catalyzes the dehydration of the 3-hydroxyacyl-CoA intermediate into trans-2,3-enoyl-CoA, within each cycle of fatty acid elongation. Thereby, it participates in the production of VLCFAs of different chain lengths that are involved in multiple biological processes as precursors of membrane lipids and lipid mediators. This chain is Very-long-chain (3R)-3-hydroxyacyl-CoA dehydratase PHS1 (PHS1), found in Saccharomyces cerevisiae (strain ATCC 204508 / S288c) (Baker's yeast).